Consider the following 398-residue polypeptide: MTVGSQVVHDEPTILIAKLHALEPRLKDKNDHQARKECLRISKALTSQVEEPDNVAVSLAFSPVIALSARVAIDLNLFALVVQHGPVASASLAALSGAEELLIIRIMRLMSTAHLVEETAARTWSATRITKAMAREEIAAGHRFNSQVVVPAIQSAPDFFRENGYSCPTDTRKGLVQYALKTEQTAFDYIISNPSMLKDFNLFMGNAMGARKFWLDWFPVQSKILDGADPEKALIVDVGGGRGHDLIAFHKQFPNAGRLVVEDLPAVLEPLGEFSAFIEQVEHDFLSGEQPVKGARAYLCHHIMHDWPDSYCLRILEGIALAMTPGYSKLLLHEIIVPEQGACDFQAQSDITAMVCNGGMERTKQQFHTLLKAAGLSVVQIWESADEGGDGIVEAMKV.

Asp-263 contacts S-adenosyl-L-methionine. The active-site Proton acceptor is the His-305.

It belongs to the class I-like SAM-binding methyltransferase superfamily. Cation-independent O-methyltransferase family.

The protein operates within secondary metabolite biosynthesis. It functions in the pathway alkaloid biosynthesis. It participates in mycotoxin biosynthesis. O-methyltransferase; part of the gene cluster that mediates the biosynthesis of penigequinolones, potent insecticidal alkaloids that contain a highly modified 10-carbon prenyl group. The first stage is catalyzed by the nonribosomal peptide synthetase penN that condenses anthranilic acid and O-methyl-L-tyrosine to produce 4'-methoxycyclopeptin. 4'-methoxycyclopeptin is then converted to 4'-methoxydehydrocyclopeptin by the ketoglutarate-dependent dioxygenase penM through dehydrogenation to form a double bond between C-alpha and C-beta of the O-methyltyrosine side chain. PenM also converts its first product methoxydehydrocyclopeptin to 4'-methoxycyclopenin. The following conversion of 4'methoxycyclopenin into 4'-methoxyviridicatin is catalyzed by the cyclopenase penL. 4'-methoxyviridicatin is the precursor of quinolone natural products, and is further converted to quinolinone B. The prenyltransferase penI then catalyzes the canonical Friedel-Crafts alkylation of quinolinone B with dimethylallyl cation to yield dimethylallyl quinolone, which is subjected to FAD-dependent dehydrogenation by the FAD-linked oxidoreductase penH to yield conjugated aryl diene. The delta(3') double bond then serves as the site of the second alkylation with DMAPP catalyzed by the prenyltransferase penG to yield a carbenium ion intermediate, which can be attacked by H(2)O to yield a styrenyl quinolone containing a C3'-hydroxyprenyl chain, or undergo cyclization to yield yaequinolones J1 and J2. The conversion of the styrenyl quinolone into the tetrahydrofuran-containing yaequinolone C is performed by the FAD-dependent monooxygenase penE and involves epoxidation of the terminal C7'-C8' olefin, followed by epoxide ring opening initiated by the C3' hydroxyl group. The predicted cysteine hydrolase penJ acts as an epoxide hydrolase that enhances the rate of the 5-exo-tet cyclization step, increasing the yield of yaequinolone C. PenF catalyzes the cationic rearrangement of the epoxide formed by penE (before ring opening to produce yaequinolone C) into yaequinolone D. Finally, the short-chain dehydrogenase/reductase (SDR)-like reductase penD, catalyzes both the dehydration of yaequinolone D and the reduction of the resulting oxonium to yield penigequinolone. The sequence is that of O-methyltransferase penC from Penicillium thymicola.